Here is a 588-residue protein sequence, read N- to C-terminus: Actin-histidine N-methyltransferase (588 aa).

The tract at residues 1–25 is disordered; that stretch reads MGKKSRVKTQKSGTGATASVSPKET. Over residues 10–25 the composition is skewed to polar residues; sequence QKSGTGATASVSPKET. S-adenosyl-L-methionine contacts are provided by residues arginine 75, 104 to 106, arginine 254, 275 to 279, and 325 to 327; these read EGF, DMCNH, and SGF. Residues 94–314 form the SET domain; the sequence is EGFEMVNFKE…AGEQIYIFYG (221 aa). The disordered stretch occupies residues 546–588; sequence VNGENSIPNGTRSGKENFNQEGSERATEGTKESSSDSTAGARE. Polar residues predominate over residues 548 to 566; the sequence is GENSIPNGTRSGKENFNQE. Residues 567 to 579 show a composition bias toward basic and acidic residues; it reads GSERATEGTKESS.

The protein belongs to the class V-like SAM-binding methyltransferase superfamily. SETD3 actin-histidine methyltransferase family. In terms of assembly, interacts with MYOD1. Post-translationally, phosphorylated by GSK3B, which is required for recognition by the SCF(FBXW7) complex and subsequent degradation. In terms of processing, ubiquitinated by the SCF(FBXW7) complex following phosphorylation by GSK3B, leading to its degradation by the proteasome.

The protein localises to the cytoplasm. Its subcellular location is the nucleus. It carries out the reaction L-histidyl-[protein] + S-adenosyl-L-methionine = N(tele)-methyl-L-histidyl-[protein] + S-adenosyl-L-homocysteine + H(+). In terms of biological role, protein-histidine N-methyltransferase that specifically mediates 3-methylhistidine (tele-methylhistidine) methylation of actin at 'His-73'. Histidine methylation of actin is required for smooth muscle contraction of the laboring uterus during delivery. Does not have protein-lysine N-methyltransferase activity and probably only catalyzes histidine methylation of actin. This chain is Actin-histidine N-methyltransferase, found in Canis lupus familiaris (Dog).